A 301-amino-acid polypeptide reads, in one-letter code: GLABROUS1 enhancer-binding protein-like 2 (301 aa).

Residues 1–62 are disordered; it reads MATPTELGFS…NTKMASPPSN (62 aa). The segment covering 44–54 has biased composition (basic residues); sequence KKKKKKTKHNT. The tract at residues 268–289 is non-canonical leucine-zipper; that stretch reads LSNEWKALCVEELKLNINKLRF.

It belongs to the GeBP family. Homo- and heterodimers. Interacts with GEBP, GPL1 and GPL3. Expressed in the apical meristem and young leaf primordia. Detected in the vascular tissues of cotyledons and leaves, in hydathodes and in the septun of siliques, but not in roots.

It localises to the nucleus. Probable transcription factor. May play redundant roles with GEBP and GPL1 in cytokinin responses by regulating the transcript levels of type-A ARR response genes. Involved in stress responses. Plays a repressive role in cell expansion by counteracting the positive role of CPR5 in this process, but does not regulate cell proliferation or endoreduplication. This chain is GLABROUS1 enhancer-binding protein-like 2, found in Arabidopsis thaliana (Mouse-ear cress).